A 172-amino-acid polypeptide reads, in one-letter code: MSAQVSLELHHRISQFLFHEASLLDDWKFRDWLAQLDEEIRYTMRTTVNAQTRDRRKGIQPPTTWIFNDTKDQLERRIARLETGMAWAEEPPSRTRHLISNCQVNETDIPNVFAVRVNYLLYRAQKERDETFYVGTRFDKVRRLEDDNWRLLERDIVLDQAVITSHNLSVLF.

It belongs to the bacterial ring-hydroxylating dioxygenase beta subunit family. In terms of assembly, this dioxygenase system consists of four proteins: the two subunits of the hydroxylase component (HcaE and HcaF), a ferredoxin (HcaC) and a ferredoxin reductase (HcaD).

It carries out the reaction 3-phenylpropanoate + NADH + O2 + H(+) = 3-(cis-5,6-dihydroxycyclohexa-1,3-dien-1-yl)propanoate + NAD(+). The catalysed reaction is (E)-cinnamate + NADH + O2 + H(+) = (2E)-3-(cis-5,6-dihydroxycyclohexa-1,3-dien-1-yl)prop-2-enoate + NAD(+). It participates in aromatic compound metabolism; 3-phenylpropanoate degradation. Part of the multicomponent 3-phenylpropionate dioxygenase. Converts 3-phenylpropionic acid (PP) and cinnamic acid (CI) into 3-phenylpropionate-dihydrodiol (PP-dihydrodiol) and cinnamic acid-dihydrodiol (CI-dihydrodiol), respectively. In Escherichia coli O17:K52:H18 (strain UMN026 / ExPEC), this protein is 3-phenylpropionate/cinnamic acid dioxygenase subunit beta.